A 284-amino-acid polypeptide reads, in one-letter code: 2-dehydro-3-deoxyphosphooctonate aldolase (284 aa).

Belongs to the KdsA family.

The protein resides in the cytoplasm. The enzyme catalyses D-arabinose 5-phosphate + phosphoenolpyruvate + H2O = 3-deoxy-alpha-D-manno-2-octulosonate-8-phosphate + phosphate. Its pathway is carbohydrate biosynthesis; 3-deoxy-D-manno-octulosonate biosynthesis; 3-deoxy-D-manno-octulosonate from D-ribulose 5-phosphate: step 2/3. The protein operates within bacterial outer membrane biogenesis; lipopolysaccharide biosynthesis. The sequence is that of 2-dehydro-3-deoxyphosphooctonate aldolase from Escherichia fergusonii (strain ATCC 35469 / DSM 13698 / CCUG 18766 / IAM 14443 / JCM 21226 / LMG 7866 / NBRC 102419 / NCTC 12128 / CDC 0568-73).